The sequence spans 785 residues: Conidiophore development regulator abaA (785 aa).

The interval Met-1–Pro-22 is disordered. The TEA DNA-binding region spans Gly-130–Asp-204. The tract at residues Glu-213–Asn-232 is disordered.

This sequence belongs to the TEC1 family.

The protein localises to the nucleus. BrlA, abaA and wetA are pivotal regulators of conidiophore development and conidium maturation. They act individually and together to regulate their own expression and that of numerous other sporulation-specific genes. Binds to the sequence 5'-CATTCY-3', where Y is a pyrimidine, making both major- and minor-groove contacts. Controls expression of wetA. This chain is Conidiophore development regulator abaA, found in Aspergillus oryzae (strain ATCC 42149 / RIB 40) (Yellow koji mold).